A 452-amino-acid polypeptide reads, in one-letter code: Bifunctional protein GlmU (452 aa).

The tract at residues 1-224 is pyrophosphorylase; the sequence is MNIVILAAGM…VWETHGVNSK (224 aa). Residues 6-9, lysine 20, glutamine 71, 76-77, 98-100, glycine 135, glutamate 149, asparagine 164, and asparagine 222 contribute to the UDP-N-acetyl-alpha-D-glucosamine site; these read LAAG, GT, and YGD. Residue aspartate 100 participates in Mg(2+) binding. Residue asparagine 222 participates in Mg(2+) binding. The tract at residues 225–245 is linker; sequence VQLAELERVHQNNIARALLEH. An N-acetyltransferase region spans residues 246 to 452; it reads GVTLADPARI…GWQRPVKIKK (207 aa). UDP-N-acetyl-alpha-D-glucosamine-binding residues include arginine 328 and lysine 346. Histidine 358 functions as the Proton acceptor in the catalytic mechanism. Positions 361 and 372 each coordinate UDP-N-acetyl-alpha-D-glucosamine. Residues alanine 375, 381–382, serine 400, alanine 418, and arginine 435 each bind acetyl-CoA; that span reads NY.

In the N-terminal section; belongs to the N-acetylglucosamine-1-phosphate uridyltransferase family. It in the C-terminal section; belongs to the transferase hexapeptide repeat family. In terms of assembly, homotrimer. Requires Mg(2+) as cofactor.

It is found in the cytoplasm. It catalyses the reaction alpha-D-glucosamine 1-phosphate + acetyl-CoA = N-acetyl-alpha-D-glucosamine 1-phosphate + CoA + H(+). It carries out the reaction N-acetyl-alpha-D-glucosamine 1-phosphate + UTP + H(+) = UDP-N-acetyl-alpha-D-glucosamine + diphosphate. Its pathway is nucleotide-sugar biosynthesis; UDP-N-acetyl-alpha-D-glucosamine biosynthesis; N-acetyl-alpha-D-glucosamine 1-phosphate from alpha-D-glucosamine 6-phosphate (route II): step 2/2. The protein operates within nucleotide-sugar biosynthesis; UDP-N-acetyl-alpha-D-glucosamine biosynthesis; UDP-N-acetyl-alpha-D-glucosamine from N-acetyl-alpha-D-glucosamine 1-phosphate: step 1/1. It participates in bacterial outer membrane biogenesis; LPS lipid A biosynthesis. In terms of biological role, catalyzes the last two sequential reactions in the de novo biosynthetic pathway for UDP-N-acetylglucosamine (UDP-GlcNAc). The C-terminal domain catalyzes the transfer of acetyl group from acetyl coenzyme A to glucosamine-1-phosphate (GlcN-1-P) to produce N-acetylglucosamine-1-phosphate (GlcNAc-1-P), which is converted into UDP-GlcNAc by the transfer of uridine 5-monophosphate (from uridine 5-triphosphate), a reaction catalyzed by the N-terminal domain. The sequence is that of Bifunctional protein GlmU from Herminiimonas arsenicoxydans.